A 162-amino-acid polypeptide reads, in one-letter code: Nucleotide-binding protein SAV_4896 (162 aa).

Belongs to the YajQ family.

Its function is as follows. Nucleotide-binding protein. The protein is Nucleotide-binding protein SAV_4896 of Streptomyces avermitilis (strain ATCC 31267 / DSM 46492 / JCM 5070 / NBRC 14893 / NCIMB 12804 / NRRL 8165 / MA-4680).